Reading from the N-terminus, the 513-residue chain is Transmembrane protein 151B (513 aa).

Residues methionine 1–proline 29 form a disordered region. Basic and acidic residues predominate over residues glutamate 14 to arginine 28. The next 3 membrane-spanning stretches (helical) occupy residues cysteine 46–threonine 66, tyrosine 93–tryptophan 113, and leucine 274–proline 294. N-linked (GlcNAc...) asparagine glycosylation is found at asparagine 366, asparagine 418, and asparagine 505.

This sequence belongs to the TMEM151 family.

The protein resides in the membrane. The polypeptide is Transmembrane protein 151B (tmem151b) (Danio rerio (Zebrafish)).